The chain runs to 473 residues: Photosystem II CP43 reaction center protein (473 aa).

Residues 1 to 14 constitute a propeptide that is removed on maturation; the sequence is MKTLYSLRRFYPVE. T15 is modified (N-acetylthreonine). The residue at position 15 (T15) is a Phosphothreonine. 5 consecutive transmembrane segments (helical) span residues 69–93, 134–155, 178–200, 255–275, and 291–312; these read LFEVAHFVPEKPMYEQGLILLPHLA, LLGPETLEESFPFFGYVWKDRN, KALYFGGVYDTWAPGGGDVRKIT, KPFAWARRAFVWSGEAYLSYS, and WFNNTAYPSEFYGPTGPEASQA. E367 provides a ligand contact to [CaMn4O5] cluster. Residues 447–471 traverse the membrane as a helical segment; sequence RARAAAAGFEKGIDRDFEPVLSMTP.

It belongs to the PsbB/PsbC family. PsbC subfamily. As to quaternary structure, PSII is composed of 1 copy each of membrane proteins PsbA, PsbB, PsbC, PsbD, PsbE, PsbF, PsbH, PsbI, PsbJ, PsbK, PsbL, PsbM, PsbT, PsbX, PsbY, PsbZ, Psb30/Ycf12, at least 3 peripheral proteins of the oxygen-evolving complex and a large number of cofactors. It forms dimeric complexes. Binds multiple chlorophylls and provides some of the ligands for the Ca-4Mn-5O cluster of the oxygen-evolving complex. It may also provide a ligand for a Cl- that is required for oxygen evolution. PSII binds additional chlorophylls, carotenoids and specific lipids. serves as cofactor.

The protein resides in the plastid. It localises to the chloroplast thylakoid membrane. One of the components of the core complex of photosystem II (PSII). It binds chlorophyll and helps catalyze the primary light-induced photochemical processes of PSII. PSII is a light-driven water:plastoquinone oxidoreductase, using light energy to abstract electrons from H(2)O, generating O(2) and a proton gradient subsequently used for ATP formation. This Amborella trichopoda protein is Photosystem II CP43 reaction center protein.